The primary structure comprises 253 residues: Indole-3-glycerol phosphate synthase (253 aa).

It belongs to the TrpC family.

The catalysed reaction is 1-(2-carboxyphenylamino)-1-deoxy-D-ribulose 5-phosphate + H(+) = (1S,2R)-1-C-(indol-3-yl)glycerol 3-phosphate + CO2 + H2O. It functions in the pathway amino-acid biosynthesis; L-tryptophan biosynthesis; L-tryptophan from chorismate: step 4/5. The chain is Indole-3-glycerol phosphate synthase from Exiguobacterium sp. (strain ATCC BAA-1283 / AT1b).